The sequence spans 511 residues: MKKRALVSVSDKTGVVEFVKGLLEQGIEVISTGGTKKLLEENGLQVIGISEVTGFPEIMDGRVKTLHPNIHGGLLAVRDNETHVAQMNELGIEPIDFVIVNLYPFKETIAKPDVTFADAIENIDIGGPTMIRSAAKNHKFVSVIVDPVDYDVVLAELEENGEVKEETKRKLAAKVFRHTAAYDALISNYLTEQMGEESPETLTVTFEKKQDLRYGENPHQKATFYKAPFAATSSVAYAEQLHGKELSYNNINDADAALSIVKEFTEPAVVAVKHMNPCGVGVGTDIHEAYTRAYEADPVSIFGGIIAANREIDKSTAEKLHEIFLEIIIAPSFSKEALEVLQNKKNLRLLTVNIEKSTSASKKLTSVQGGLLVQEEDTLSLDESTISIPTKREPSEQEWKDLKLAWKVVKHVKSNAIVLAKDDMTIGVGAGQMNRVGSAKIAITQAGEKAQGSALASDAFFPMPDTLEEAAKAGITAIIQPGGSIRDEDSIKVADTYGIAMVFTGVRHFKH.

An MGS-like domain is found at 1-145 (MKKRALVSVS…KNHKFVSVIV (145 aa)).

It belongs to the PurH family.

The catalysed reaction is (6R)-10-formyltetrahydrofolate + 5-amino-1-(5-phospho-beta-D-ribosyl)imidazole-4-carboxamide = 5-formamido-1-(5-phospho-D-ribosyl)imidazole-4-carboxamide + (6S)-5,6,7,8-tetrahydrofolate. It carries out the reaction IMP + H2O = 5-formamido-1-(5-phospho-D-ribosyl)imidazole-4-carboxamide. It participates in purine metabolism; IMP biosynthesis via de novo pathway; 5-formamido-1-(5-phospho-D-ribosyl)imidazole-4-carboxamide from 5-amino-1-(5-phospho-D-ribosyl)imidazole-4-carboxamide (10-formyl THF route): step 1/1. It functions in the pathway purine metabolism; IMP biosynthesis via de novo pathway; IMP from 5-formamido-1-(5-phospho-D-ribosyl)imidazole-4-carboxamide: step 1/1. This chain is Bifunctional purine biosynthesis protein PurH, found in Bacillus cereus (strain ATCC 10987 / NRS 248).